Consider the following 492-residue polypeptide: NADH-quinone oxidoreductase subunit N (492 aa).

14 consecutive transmembrane segments (helical) span residues 16–36, 44–64, 81–101, 111–131, 134–154, 168–188, 210–230, 244–264, 276–296, 306–326, 332–352, 382–402, 423–443, and 463–483; these read LLIP…VGVF, LYIT…FLEG, ISLL…LFFM, GAEF…MASS, LILI…LIAL, FIMG…LYAA, ILVF…VTLV, NALL…AVII, AFVE…PNLI, MLAY…LINT, VIFF…GILW, LAIL…FCVF, IMAI…IYIF, and FALS…QNLL.

Belongs to the complex I subunit 2 family. In terms of assembly, NDH-1 is composed of 14 different subunits. Subunits NuoA, H, J, K, L, M, N constitute the membrane sector of the complex.

The protein localises to the cell inner membrane. The catalysed reaction is a quinone + NADH + 5 H(+)(in) = a quinol + NAD(+) + 4 H(+)(out). Its function is as follows. NDH-1 shuttles electrons from NADH, via FMN and iron-sulfur (Fe-S) centers, to quinones in the respiratory chain. The immediate electron acceptor for the enzyme in this species is believed to be ubiquinone. Couples the redox reaction to proton translocation (for every two electrons transferred, four hydrogen ions are translocated across the cytoplasmic membrane), and thus conserves the redox energy in a proton gradient. This chain is NADH-quinone oxidoreductase subunit N, found in Helicobacter hepaticus (strain ATCC 51449 / 3B1).